A 482-amino-acid chain; its full sequence is tRNA sulfurtransferase (482 aa).

One can recognise a THUMP domain in the interval 61 to 165 (LAIRDALTRI…DDRLLLIKGR (105 aa)). Residues 183 to 184 (LI), Lys-265, Gly-287, and Gln-296 contribute to the ATP site. Residues Cys-344 and Cys-456 are joined by a disulfide bond. The Rhodanese domain maps to 404 to 482 (FGPNDVILDI…GFNNVKVYRP (79 aa)). Cys-456 functions as the Cysteine persulfide intermediate in the catalytic mechanism.

This sequence belongs to the ThiI family.

It localises to the cytoplasm. It carries out the reaction [ThiI sulfur-carrier protein]-S-sulfanyl-L-cysteine + a uridine in tRNA + 2 reduced [2Fe-2S]-[ferredoxin] + ATP + H(+) = [ThiI sulfur-carrier protein]-L-cysteine + a 4-thiouridine in tRNA + 2 oxidized [2Fe-2S]-[ferredoxin] + AMP + diphosphate. The catalysed reaction is [ThiS sulfur-carrier protein]-C-terminal Gly-Gly-AMP + S-sulfanyl-L-cysteinyl-[cysteine desulfurase] + AH2 = [ThiS sulfur-carrier protein]-C-terminal-Gly-aminoethanethioate + L-cysteinyl-[cysteine desulfurase] + A + AMP + 2 H(+). It participates in cofactor biosynthesis; thiamine diphosphate biosynthesis. In terms of biological role, catalyzes the ATP-dependent transfer of a sulfur to tRNA to produce 4-thiouridine in position 8 of tRNAs, which functions as a near-UV photosensor. Also catalyzes the transfer of sulfur to the sulfur carrier protein ThiS, forming ThiS-thiocarboxylate. This is a step in the synthesis of thiazole, in the thiamine biosynthesis pathway. The sulfur is donated as persulfide by IscS. The sequence is that of tRNA sulfurtransferase from Escherichia fergusonii (strain ATCC 35469 / DSM 13698 / CCUG 18766 / IAM 14443 / JCM 21226 / LMG 7866 / NBRC 102419 / NCTC 12128 / CDC 0568-73).